Reading from the N-terminus, the 347-residue chain is Phosphoribosylformylglycinamidine cyclo-ligase (347 aa).

It belongs to the AIR synthase family.

It localises to the cytoplasm. The enzyme catalyses 2-formamido-N(1)-(5-O-phospho-beta-D-ribosyl)acetamidine + ATP = 5-amino-1-(5-phospho-beta-D-ribosyl)imidazole + ADP + phosphate + H(+). It participates in purine metabolism; IMP biosynthesis via de novo pathway; 5-amino-1-(5-phospho-D-ribosyl)imidazole from N(2)-formyl-N(1)-(5-phospho-D-ribosyl)glycinamide: step 2/2. This Alkaliphilus metalliredigens (strain QYMF) protein is Phosphoribosylformylglycinamidine cyclo-ligase.